The following is a 209-amino-acid chain: MARYCGPKNRVARRFGANIFGRSRNPLLKKPHPPGQHGMQRKKKSDYGLQLEEKQKLKACYGMIMEKQLVKAFKEVIHKQGNVAQMFLERFECRLDNMVYRMGFAKTIFAAQQLVAHGHILVNGRRVDRRSFFLRPGMQISLKEKSKRLQSVKDALESKDESSLPSYISLDKTGFKGELLVSPEQDQIEAQLPLPINISVVCEFLSHRT.

The tract at residues 23–46 is disordered; it reads SRNPLLKKPHPPGQHGMQRKKKSD. One can recognise an S4 RNA-binding domain in the interval 93–153; that stretch reads CRLDNMVYRM…EKSKRLQSVK (61 aa).

The protein belongs to the universal ribosomal protein uS4 family. In terms of assembly, part of the 30S ribosomal subunit. Contacts protein S5. The interaction surface between S4 and S5 is involved in control of translational fidelity.

Functionally, one of the primary rRNA binding proteins, it binds directly to 16S rRNA where it nucleates assembly of the body of the 30S subunit. With S5 and S12 plays an important role in translational accuracy. The protein is Small ribosomal subunit protein uS4 of Chlamydia pneumoniae (Chlamydophila pneumoniae).